The sequence spans 120 residues: Large ribosomal subunit protein uL18 (120 aa).

The protein belongs to the universal ribosomal protein uL18 family. Part of the 50S ribosomal subunit; part of the 5S rRNA/L5/L18/L25 subcomplex. Contacts the 5S and 23S rRNAs.

In terms of biological role, this is one of the proteins that bind and probably mediate the attachment of the 5S RNA into the large ribosomal subunit, where it forms part of the central protuberance. This chain is Large ribosomal subunit protein uL18, found in Bartonella bacilliformis (strain ATCC 35685 / KC583 / Herrer 020/F12,63).